The primary structure comprises 587 residues: MPQQLLITPATEATWVKLKEVSLWEDVTKMFGGEALLSHDANGTQQESLADGTTPGTPAAGSHDGATPGTTATGSHDEATPGTPAAGSHDGETPGIPAAGSHDGETPGTPTAGSHDGVTPGTTAAGSQESLTFKDIAVDLSQEEWGQLAPAYQDLYREVMLENYRNLVSVAGYQLSKPTVISQLEKGEGPCMAESQGPEDPILDVKNKLETKESTAEDDISVKLDHGITRGRLIEDDIVCSPLKKASSYSDTLESHRATCGKGTRRAIWTHKKKRQEGNKLENPESSNVILEQKHRKHKPARKRNKYKLDSIDHPVSCMRARRYPCNVCEKMFKQPIHLVEHMRTHTGEKPFRCKECGRAFSQSASLNTHQRIHTGEKPFACEECGKAFRHRSSLNQHHRTHTGEKPFTCDKCQKAFSQNISLVQHLRTHSGEKPFSCSECGKPFRQIRHLSEHVRIHTGEKPYKCTSCCKTFSHRAYLTHHQRIHTGERPYKCKECGKAFRQRIHLSNHRTVHTGVKAYECNRCGKAYRHDSSFKKHQRHHTGEKPYECTECGKSFSYNSSLSRHQKIHRRNTFRDDPGHENKRQL.

Residues 42 to 128 form a disordered region; that stretch reads NGTQQESLAD…TPGTTAAGSQ (87 aa). Residues 76–147 form the KRAB domain; that stretch reads HDEATPGTPA…VDLSQEEWGQ (72 aa). 9 consecutive C2H2-type zinc fingers follow at residues 271 to 293, 299 to 321, 327 to 349, 355 to 377, 383 to 405, 411 to 433, 439 to 461, 467 to 489, and 495 to 517; these read HKKK…ILEQ, KPAR…CMRA, NVCE…HTGE, KECG…HTGE, EECG…HTGE, DKCQ…HSGE, SECG…HTGE, TSCC…HTGE, and KECG…HTGV. A disordered region spans residues 564-587; the sequence is SRHQKIHRRNTFRDDPGHENKRQL. Residues 574–587 show a composition bias toward basic and acidic residues; the sequence is TFRDDPGHENKRQL.

It belongs to the krueppel C2H2-type zinc-finger protein family.

Its subcellular location is the nucleus. Putative transcription factor that appears to regulate lipid metabolism. This is Zinc finger protein 69 from Mus musculus (Mouse).